The sequence spans 1770 residues: AF4/FMR2 family member lilli (1770 aa).

Composition is skewed to low complexity over residues 1–19 (MAQQ…HPHQ), 154–204 (LGHS…YLKQ), and 227–269 (PSSS…GTTP). 6 disordered regions span residues 1–28 (MAQQ…NQLQ), 134–327 (SRHA…EKDI), 402–660 (TSLL…PGNV), 761–805 (LHSA…LQLP), 822–1173 (MQKA…KQGQ), and 1291–1390 (KHEH…QISK). Over residues 402 to 414 (TSLLTTPPHASQG) the composition is skewed to polar residues. Residues 434–447 (KAAAALSPTAAAKP) show a composition bias toward low complexity. Over residues 448–461 (LKTEKNHTLEKQDS) the composition is skewed to basic and acidic residues. The segment covering 463-474 (LENDLELSESED) has biased composition (acidic residues). 2 positions are modified to phosphoserine: Ser-470 and Ser-472. The span at 483-503 (SAGNSSNSSESDSSESGSESS) shows a compositional bias: low complexity. The segment covering 511–520 (QHHHHNHHHQ) has biased composition (basic residues). The span at 521–552 (QQQQQLQQQQQQQLLQQKQQHQQILQQQQRQL) shows a compositional bias: low complexity. A compositionally biased stretch (gly residues) spans 582 to 614 (FGSGGAGNGGCSTASSGGGGGGSGSGGGSGSSS). Low complexity predominate over residues 615–625 (GIGTMSSGSSS). 2 stretches are compositionally biased toward polar residues: residues 626 to 638 (NKTP…NKWT) and 647 to 659 (ANQT…SPGN). The span at 768-800 (SDSGTSGSGSTSSSSSSSDSAPGEVVPMPGPGE) shows a compositional bias: low complexity. Positions 844–854 (QRQKKPRKKKP) are enriched in basic residues. Phosphoserine is present on residues Ser-863 and Ser-864. 5 stretches are compositionally biased toward low complexity: residues 880–893 (AAAA…ATAT), 909–928 (QQQS…SSSQ), 994–1028 (ANAS…SSSS), 1071–1081 (SGSSSPSSSSS), and 1111–1131 (SQHS…SSTS). The segment at residues 900-912 (KKGRGRPRKQQQS) is a DNA-binding region (a.T hook). Ser-920 and Ser-922 each carry phosphoserine. Composition is skewed to basic and acidic residues over residues 1295–1312 (PHPV…ESKF) and 1321–1355 (FQLK…EREQ). Phosphoserine is present on Ser-1442. Composition is skewed to low complexity over residues 1483-1499 (AAAT…TSTA) and 1656-1676 (GNTP…SGSN). 2 disordered regions span residues 1483–1502 (AAAT…APPA) and 1656–1683 (GNTP…GKIV).

Belongs to the AF4 family.

The protein resides in the nucleus. Has a role in transcriptional regulation. Acts in parallel with the Ras/MAPK and the PI3K/PKB pathways in the control of cell identity and cellular growth. Essential for regulation of the cytoskeleton and cell growth but not for cell proliferation or growth rate. Required specifically for the microtubule-based basal transport of lipid droplets. Plays a partially redundant function downstream of Raf in cell fate specification in the developing eye. Pair-rule protein that regulates embryonic cellularization, gastrulation and segmentation. The chain is AF4/FMR2 family member lilli from Drosophila pseudoobscura pseudoobscura (Fruit fly).